We begin with the raw amino-acid sequence, 173 residues long: Probable calcium-binding protein CML14 (173 aa).

EF-hand domains follow at residues 21-56 (SQLKQLRELFRRFDMNGDGSLTQLELAALLRSLGLR), 57-92 (PTGDEVHALLAGMDANGNGSVEFDELAAAIAPVLTT), 97-132 (VDQAQLLEVFRAFDRDGNGFISAAELARSMARLGQP), and 133-168 (LTFEELTRMMRDADTDGDGVISFKEFAAVMAKSALD). 18 residues coordinate Ca(2+): Asp34, Asn36, Asp38, Ser40, Glu45, Asp70, Asn72, Asn74, Ser76, Glu81, Asp110, Asp112, Asn114, Glu121, Asp146, Asp148, Asp150, and Glu157.

Its function is as follows. Potential calcium sensor. This Oryza sativa subsp. japonica (Rice) protein is Probable calcium-binding protein CML14 (CML14).